We begin with the raw amino-acid sequence, 304 residues long: Acetaldehyde dehydrogenase 4 (304 aa).

The active-site Acyl-thioester intermediate is cysteine 131. NAD(+) is bound by residues 162–170 (SAGPGTRKN) and asparagine 273.

It belongs to the acetaldehyde dehydrogenase family. As to quaternary structure, heterotetramer composed of two BphI (aldolase) and two BphJ (dehydrogenase).

It catalyses the reaction acetaldehyde + NAD(+) + CoA = acetyl-CoA + NADH + H(+). It carries out the reaction propanal + NAD(+) + CoA = propanoyl-CoA + NADH + H(+). Its pathway is xenobiotic degradation; polychlorinated biphenyl degradation. Its activity is regulated as follows. Bound pyruvate or other intermediates in the aldol addition reaction catalyzed by BphI allosterically activates BphJ reductive deacylation activity. Its function is as follows. Catalyzes the conversion of acetaldehyde or propanal to acetyl-CoA or propanoyl-CoA, respectively, using NAD(+) and coenzyme A. Displays broad specificity since it can utilize aliphatic aldehydes from two to five carbons in length as substrates; the aldehyde substrates can be directly channeled from the aldolase BphI to the dehydrogenase BphJ. Is the final enzyme in the meta-cleavage pathway for the degradation of polychlorinated biphenyls (PCBs). Is also able to utilize NADP(+) instead of NAD(+). Is not active with succinic semialdehyde or picolinaldehyde as substrates. Can also catalyze the reverse reaction, i.e. the reductive deacylation of acetyl-CoA to acetaldehyde, which is then channeled to the BphI active site. The BphI-BphJ enzyme complex exhibits unique bidirectionality in substrate channeling and allosteric activation. The polypeptide is Acetaldehyde dehydrogenase 4 (bphJ) (Paraburkholderia xenovorans (strain LB400)).